We begin with the raw amino-acid sequence, 418 residues long: UDP-N-acetylglucosamine 1-carboxyvinyltransferase 2 (418 aa).

22–23 (KN) is a binding site for phosphoenolpyruvate. Arg93 serves as a coordination point for UDP-N-acetyl-alpha-D-glucosamine. Cys117 functions as the Proton donor in the catalytic mechanism. Cys117 is subject to 2-(S-cysteinyl)pyruvic acid O-phosphothioketal. UDP-N-acetyl-alpha-D-glucosamine-binding positions include 122–126 (RPIDQ), Asp305, and Ile327.

Belongs to the EPSP synthase family. MurA subfamily.

The protein resides in the cytoplasm. It catalyses the reaction phosphoenolpyruvate + UDP-N-acetyl-alpha-D-glucosamine = UDP-N-acetyl-3-O-(1-carboxyvinyl)-alpha-D-glucosamine + phosphate. The protein operates within cell wall biogenesis; peptidoglycan biosynthesis. Functionally, cell wall formation. Adds enolpyruvyl to UDP-N-acetylglucosamine. This chain is UDP-N-acetylglucosamine 1-carboxyvinyltransferase 2, found in Clostridium acetobutylicum (strain ATCC 824 / DSM 792 / JCM 1419 / IAM 19013 / LMG 5710 / NBRC 13948 / NRRL B-527 / VKM B-1787 / 2291 / W).